The chain runs to 185 residues: Iodate reductase subunit IdrB (185 aa).

Residues 1–46 (MTTHPIHLHHDDPAHGGERACMSRRSFLLAGGAMVTLASLPGTAVA) constitute a signal peptide (tat-type signal). In terms of domain architecture, Rieske spans 69-168 (GEPLEFAYPY…LEVRGDDIYA (100 aa)). [2Fe-2S] cluster is bound by residues cysteine 109, histidine 111, cysteine 130, and histidine 133.

The protein belongs to the AOX family. The iodate reductase (Idr) complex is composed of a molybdopterin-dependent iodate reductase (IdrA and IdrB subunits) and two associated peroxidases (IdrP1 and IdrP2). [2Fe-2S] cluster serves as cofactor. Post-translationally, predicted to be exported by the Tat system. The position of the signal peptide cleavage has not been experimentally proven.

The protein resides in the periplasm. In terms of biological role, involved in iodate respiration. May accept electrons from cytochrome c551, and catalyze the reduction of iodate (IO(3)(-)) to produce the chemically unstable intermediate hypoiodous acid (HIO). This intermediate then undergoes abiotic disproportionation to yield two molecules of iodide (I(-)) and one molecule of iodate. The resultant iodate subsequently cycles back into the reductive pathway. The initial reduction of iodate may inadvertently produce low levels of incidental toxic H(2)O(2), which is detoxified by IdrP1 and IdrP2. The polypeptide is Iodate reductase subunit IdrB (Denitromonas iodatirespirans).